The chain runs to 192 residues: Peptidyl-tRNA hydrolase (192 aa).

Tyrosine 14 contributes to the tRNA binding site. Catalysis depends on histidine 19, which acts as the Proton acceptor. TRNA-binding residues include tyrosine 64, asparagine 66, and asparagine 112.

This sequence belongs to the PTH family. In terms of assembly, monomer.

It is found in the cytoplasm. It catalyses the reaction an N-acyl-L-alpha-aminoacyl-tRNA + H2O = an N-acyl-L-amino acid + a tRNA + H(+). Its function is as follows. Hydrolyzes ribosome-free peptidyl-tRNAs (with 1 or more amino acids incorporated), which drop off the ribosome during protein synthesis, or as a result of ribosome stalling. Catalyzes the release of premature peptidyl moieties from peptidyl-tRNA molecules trapped in stalled 50S ribosomal subunits, and thus maintains levels of free tRNAs and 50S ribosomes. This Anaeromyxobacter dehalogenans (strain 2CP-1 / ATCC BAA-258) protein is Peptidyl-tRNA hydrolase.